The primary structure comprises 194 residues: Fe/S biogenesis protein NfuA (194 aa).

[4Fe-4S] cluster is bound by residues cysteine 152 and cysteine 155.

Belongs to the NfuA family. As to quaternary structure, homodimer. [4Fe-4S] cluster serves as cofactor.

In terms of biological role, involved in iron-sulfur cluster biogenesis. Binds a 4Fe-4S cluster, can transfer this cluster to apoproteins, and thereby intervenes in the maturation of Fe/S proteins. Could also act as a scaffold/chaperone for damaged Fe/S proteins. In Pseudomonas aeruginosa (strain LESB58), this protein is Fe/S biogenesis protein NfuA.